A 304-amino-acid polypeptide reads, in one-letter code: HTH-type transcriptional regulator AdmX (304 aa).

Positions 1–58 constitute an HTH lysR-type domain; that stretch reads MKLRHLEIFYTVMTCGSLSRAAESLNISQPAASKSLKNAELKLGFKLFQRVRGKLLPS. A DNA-binding region (H-T-H motif) is located at residues 18 to 37; sequence LSRAAESLNISQPAASKSLK.

This sequence belongs to the LysR transcriptional regulatory family.

Its subcellular location is the cytoplasm. Its activity is regulated as follows. AdmX-mediated transcription is inhibited by indole-3-acetic and indole-3-pyruvic acids. AdmX recognizes and binds the auxin indole-3-acetic acid (IAA), which causes conformational changes in AdmX that result in the inhibition of the expression of the andrimid gene cluster and the suppression of antibiotic production. It also recognizes indole-3-pyruvic acid (IPA), an intermediate of the main IAA biosynthetic pathway in plants and plant beneficial bacteria, which also prevents andrimid synthesis, but to a much lesser extent. In terms of biological role, positively regulates the biosynthesis of andrimid, a broad-spectrum antibiotic, by activating the expression of the adm biosynthetic gene cluster. It specifically binds to a region within the adm promoter. The polypeptide is HTH-type transcriptional regulator AdmX (Serratia plymuthica).